We begin with the raw amino-acid sequence, 207 residues long: Large ribosomal subunit protein uL3c (207 aa).

The interval 115-151 (IGKGFAGNQKRHNFSRGPMTHGSKNHRLPGSIGAGST) is disordered.

This sequence belongs to the universal ribosomal protein uL3 family. Part of the 50S ribosomal subunit.

It localises to the plastid. The protein resides in the chloroplast. In terms of biological role, one of the primary rRNA binding proteins, it binds directly near the 3'-end of the 23S rRNA, where it nucleates assembly of the 50S subunit. The chain is Large ribosomal subunit protein uL3c (rpl3) from Emiliania huxleyi (Coccolithophore).